The sequence spans 233 residues: Ubiquinone biosynthesis O-methyltransferase (233 aa).

S-adenosyl-L-methionine contacts are provided by Arg-37, Gly-56, Asp-77, and Met-121.

This sequence belongs to the methyltransferase superfamily. UbiG/COQ3 family.

The catalysed reaction is a 3-demethylubiquinol + S-adenosyl-L-methionine = a ubiquinol + S-adenosyl-L-homocysteine + H(+). It catalyses the reaction a 3-(all-trans-polyprenyl)benzene-1,2-diol + S-adenosyl-L-methionine = a 2-methoxy-6-(all-trans-polyprenyl)phenol + S-adenosyl-L-homocysteine + H(+). The protein operates within cofactor biosynthesis; ubiquinone biosynthesis. In terms of biological role, O-methyltransferase that catalyzes the 2 O-methylation steps in the ubiquinone biosynthetic pathway. In Azoarcus sp. (strain BH72), this protein is Ubiquinone biosynthesis O-methyltransferase.